The following is a 175-amino-acid chain: MDVKDFIRTIPDYPKPGILFRDITTLLSDPEGFRGAVDALVSLHKGAKFDVVAGIEARGFILGGAVAHQLGLGFIPVRKKGKLPFTTIGQEYDLEYGTDMVEIHTDAVKPDQRVLLIDDLIATGGTAEAAVKLIARAGGNVLASSFVIELPELGGRARLEALDIEVLSLCSFEGH.

This sequence belongs to the purine/pyrimidine phosphoribosyltransferase family. In terms of assembly, homodimer.

Its subcellular location is the cytoplasm. The enzyme catalyses AMP + diphosphate = 5-phospho-alpha-D-ribose 1-diphosphate + adenine. It functions in the pathway purine metabolism; AMP biosynthesis via salvage pathway; AMP from adenine: step 1/1. Catalyzes a salvage reaction resulting in the formation of AMP, that is energically less costly than de novo synthesis. The sequence is that of Adenine phosphoribosyltransferase from Parvibaculum lavamentivorans (strain DS-1 / DSM 13023 / NCIMB 13966).